Here is a 226-residue protein sequence, read N- to C-terminus: Leucyl/phenylalanyl-tRNA--protein transferase (226 aa).

It belongs to the L/F-transferase family.

It is found in the cytoplasm. The catalysed reaction is N-terminal L-lysyl-[protein] + L-leucyl-tRNA(Leu) = N-terminal L-leucyl-L-lysyl-[protein] + tRNA(Leu) + H(+). It carries out the reaction N-terminal L-arginyl-[protein] + L-leucyl-tRNA(Leu) = N-terminal L-leucyl-L-arginyl-[protein] + tRNA(Leu) + H(+). The enzyme catalyses L-phenylalanyl-tRNA(Phe) + an N-terminal L-alpha-aminoacyl-[protein] = an N-terminal L-phenylalanyl-L-alpha-aminoacyl-[protein] + tRNA(Phe). Functionally, functions in the N-end rule pathway of protein degradation where it conjugates Leu, Phe and, less efficiently, Met from aminoacyl-tRNAs to the N-termini of proteins containing an N-terminal arginine or lysine. This chain is Leucyl/phenylalanyl-tRNA--protein transferase, found in Pseudomonas aeruginosa (strain LESB58).